We begin with the raw amino-acid sequence, 418 residues long: BTB and MATH domain-containing protein 41 (418 aa).

A disordered region spans residues 1–33 (MEINNGAQPENAAVSIPSRSPSGKSEKRKSPSI). The MATH domain maps to 45–173 (SFTNYWSVER…NDILTIGCEL (129 aa)). In terms of domain architecture, BTB spans 232–293 (SDFIIVASCG…TLDVLLRHMY (62 aa)).

Interacts with cul-3.

The protein operates within protein modification; protein ubiquitination. Its function is as follows. Probable substrate-specific adapter of an E3 ubiquitin-protein ligase complex which mediates the ubiquitination and subsequent proteasomal degradation of target proteins. This chain is BTB and MATH domain-containing protein 41 (bath-41), found in Caenorhabditis elegans.